We begin with the raw amino-acid sequence, 127 residues long: Aspartate 1-decarboxylase (127 aa).

Residue S25 is the Schiff-base intermediate with substrate; via pyruvic acid of the active site. Position 25 is a pyruvic acid (Ser) (S25). T57 contacts substrate. The active-site Proton donor is Y58. 73 to 75 (GSA) contacts substrate.

This sequence belongs to the PanD family. In terms of assembly, heterooctamer of four alpha and four beta subunits. Requires pyruvate as cofactor. In terms of processing, is synthesized initially as an inactive proenzyme, which is activated by self-cleavage at a specific serine bond to produce a beta-subunit with a hydroxyl group at its C-terminus and an alpha-subunit with a pyruvoyl group at its N-terminus.

The protein resides in the cytoplasm. The catalysed reaction is L-aspartate + H(+) = beta-alanine + CO2. Its pathway is cofactor biosynthesis; (R)-pantothenate biosynthesis; beta-alanine from L-aspartate: step 1/1. Its function is as follows. Catalyzes the pyruvoyl-dependent decarboxylation of aspartate to produce beta-alanine. The sequence is that of Aspartate 1-decarboxylase from Polaromonas naphthalenivorans (strain CJ2).